Here is a 257-residue protein sequence, read N- to C-terminus: Thiazole synthase (257 aa).

K100 serves as the catalytic Schiff-base intermediate with DXP. 1-deoxy-D-xylulose 5-phosphate is bound by residues G161, 187 to 188 (AG), and 209 to 210 (NT).

The protein belongs to the ThiG family. As to quaternary structure, homotetramer. Forms heterodimers with either ThiH or ThiS.

Its subcellular location is the cytoplasm. It catalyses the reaction [ThiS sulfur-carrier protein]-C-terminal-Gly-aminoethanethioate + 2-iminoacetate + 1-deoxy-D-xylulose 5-phosphate = [ThiS sulfur-carrier protein]-C-terminal Gly-Gly + 2-[(2R,5Z)-2-carboxy-4-methylthiazol-5(2H)-ylidene]ethyl phosphate + 2 H2O + H(+). It participates in cofactor biosynthesis; thiamine diphosphate biosynthesis. Its function is as follows. Catalyzes the rearrangement of 1-deoxy-D-xylulose 5-phosphate (DXP) to produce the thiazole phosphate moiety of thiamine. Sulfur is provided by the thiocarboxylate moiety of the carrier protein ThiS. In vitro, sulfur can be provided by H(2)S. The sequence is that of Thiazole synthase from Pelagibacter ubique (strain HTCC1062).